Reading from the N-terminus, the 363-residue chain is 5-formaminoimidazole-4-carboxamide-1-(beta)-D-ribofuranosyl 5'-monophosphate synthetase (363 aa).

The 5-amino-1-(5-phospho-beta-D-ribosyl)imidazole-4-carboxamide site is built by histidine 29 and serine 96. Residues 118 to 354 form the ATP-grasp domain; it reads RDILRWEAER…IALEIKNAIK (237 aa). ATP contacts are provided by residues 148–210 and glutamate 232; that span reads PSEI…CNYC. Asparagine 260 is a binding site for 5-amino-1-(5-phospho-beta-D-ribosyl)imidazole-4-carboxamide. Mg(2+)-binding residues include glutamine 299 and glutamate 312.

This sequence belongs to the phosphohexose mutase family. Requires Mg(2+) as cofactor. Mn(2+) is required as a cofactor.

It catalyses the reaction 5-amino-1-(5-phospho-beta-D-ribosyl)imidazole-4-carboxamide + formate + ATP = 5-formamido-1-(5-phospho-D-ribosyl)imidazole-4-carboxamide + ADP + phosphate. The protein operates within purine metabolism; IMP biosynthesis via de novo pathway; 5-formamido-1-(5-phospho-D-ribosyl)imidazole-4-carboxamide from 5-amino-1-(5-phospho-D-ribosyl)imidazole-4-carboxamide (formate route): step 1/1. Functionally, catalyzes the ATP- and formate-dependent formylation of 5-aminoimidazole-4-carboxamide-1-beta-d-ribofuranosyl 5'-monophosphate (AICAR) to 5-formaminoimidazole-4-carboxamide-1-beta-d-ribofuranosyl 5'-monophosphate (FAICAR) in the absence of folates. The protein is 5-formaminoimidazole-4-carboxamide-1-(beta)-D-ribofuranosyl 5'-monophosphate synthetase of Methanobrevibacter smithii (strain ATCC 35061 / DSM 861 / OCM 144 / PS).